Consider the following 238-residue polypeptide: Large ribosomal subunit protein uL1 (238 aa).

The segment at 217-238 (TNGPGVPVDETIQKNYADDAEA) is disordered.

It belongs to the universal ribosomal protein uL1 family. As to quaternary structure, part of the 50S ribosomal subunit.

In terms of biological role, binds directly to 23S rRNA. The L1 stalk is quite mobile in the ribosome, and is involved in E site tRNA release. Functionally, protein L1 is also a translational repressor protein, it controls the translation of the L11 operon by binding to its mRNA. The chain is Large ribosomal subunit protein uL1 from Corynebacterium urealyticum (strain ATCC 43042 / DSM 7109).